Here is a 100-residue protein sequence, read N- to C-terminus: Small ubiquitin-related modifier 1 (100 aa).

Basic and acidic residues predominate over residues 1–12 (MSAAGEEDKKPA). Residues 1 to 23 (MSAAGEEDKKPAGGEGGGAHINL) form a disordered region. The Ubiquitin-like domain maps to 19–96 (AHINLKVKGQ…IDAMLHQTGG (78 aa)). Residue G96 forms a Glycyl lysine isopeptide (Gly-Lys) (interchain with K-? in acceptor proteins) linkage.

Belongs to the ubiquitin family. SUMO subfamily. As to quaternary structure, interacts with SAE2, SCE1 and SIZ1. Covalently attached to a number of proteins.

It localises to the nucleus. The protein resides in the cytoplasm. Its function is as follows. Ubiquitin-like protein which can be covalently attached to target lysines as a monomer. Does not seem to be involved in protein degradation and may function as an antagonist of ubiquitin in the degradation process. This chain is Small ubiquitin-related modifier 1 (SUMO1), found in Oryza sativa subsp. japonica (Rice).